The sequence spans 122 residues: Small ribosomal subunit protein uS13 (122 aa).

The tract at residues 98 to 122 (VRGQRTHTNARTRKGPAKAIAGKKK) is disordered.

The protein belongs to the universal ribosomal protein uS13 family. Part of the 30S ribosomal subunit. Forms a loose heterodimer with protein S19. Forms two bridges to the 50S subunit in the 70S ribosome.

Functionally, located at the top of the head of the 30S subunit, it contacts several helices of the 16S rRNA. In the 70S ribosome it contacts the 23S rRNA (bridge B1a) and protein L5 of the 50S subunit (bridge B1b), connecting the 2 subunits; these bridges are implicated in subunit movement. Contacts the tRNAs in the A and P-sites. This is Small ribosomal subunit protein uS13 from Ruegeria sp. (strain TM1040) (Silicibacter sp.).